The sequence spans 165 residues: 6,7-dimethyl-8-ribityllumazine synthase (165 aa).

Residues Trp-26, Ser-58–Glu-60, and Val-80–Ile-82 contribute to the 5-amino-6-(D-ribitylamino)uracil site. Gly-85–Thr-86 serves as a coordination point for (2S)-2-hydroxy-3-oxobutyl phosphate. The active-site Proton donor is His-88. Asn-113 contributes to the 5-amino-6-(D-ribitylamino)uracil binding site. (2S)-2-hydroxy-3-oxobutyl phosphate is bound at residue Arg-127.

It belongs to the DMRL synthase family.

The catalysed reaction is (2S)-2-hydroxy-3-oxobutyl phosphate + 5-amino-6-(D-ribitylamino)uracil = 6,7-dimethyl-8-(1-D-ribityl)lumazine + phosphate + 2 H2O + H(+). It participates in cofactor biosynthesis; riboflavin biosynthesis; riboflavin from 2-hydroxy-3-oxobutyl phosphate and 5-amino-6-(D-ribitylamino)uracil: step 1/2. Functionally, catalyzes the formation of 6,7-dimethyl-8-ribityllumazine by condensation of 5-amino-6-(D-ribitylamino)uracil with 3,4-dihydroxy-2-butanone 4-phosphate. This is the penultimate step in the biosynthesis of riboflavin. The chain is 6,7-dimethyl-8-ribityllumazine synthase from Saccharopolyspora erythraea (strain ATCC 11635 / DSM 40517 / JCM 4748 / NBRC 13426 / NCIMB 8594 / NRRL 2338).